Reading from the N-terminus, the 327-residue chain is Putative D-threonate 4-phosphate dehydrogenase (327 aa).

His-139 and Thr-140 together coordinate substrate. His-169, His-213, and His-268 together coordinate a divalent metal cation. 3 residues coordinate substrate: Lys-276, Asn-285, and Arg-294.

Belongs to the PdxA family. PdxA2 subfamily. As to quaternary structure, homodimer. A divalent metal cation is required as a cofactor.

It catalyses the reaction 4-O-phospho-D-threonate + NAD(+) = dihydroxyacetone phosphate + CO2 + NADH. Catalyzes the NAD-dependent oxidation and subsequent decarboxylation of D-threonate 4-phosphate to produce dihydroxyacetone phosphate (DHAP). This Salmonella typhi protein is Putative D-threonate 4-phosphate dehydrogenase.